The following is a 290-amino-acid chain: Virginiamycin B lyase (290 aa).

Residue histidine 226 coordinates substrate. Position 265 (glutamate 265) interacts with Mg(2+). Histidine 267 acts as the Proton acceptor in catalysis. Glutamate 282 contacts Mg(2+).

Belongs to the Vgb family. In terms of assembly, monomer. Requires Mg(2+) as cofactor.

In terms of biological role, inactivates the type B streptogramin antibiotics by linearizing the lactone ring at the ester linkage, generating a free phenylglycine carboxylate and converting the threonyl moiety into 2-amino-butenoic acid. This Mycolicibacterium vanbaalenii (strain DSM 7251 / JCM 13017 / BCRC 16820 / KCTC 9966 / NRRL B-24157 / PYR-1) (Mycobacterium vanbaalenii) protein is Virginiamycin B lyase.